The primary structure comprises 108 residues: Tetrahydromethanopterin S-methyltransferase subunit B (108 aa).

A helical transmembrane segment spans residues 79–99 (GMFFGFWVTMAILVLVTILAV).

This sequence belongs to the MtrB family. As to quaternary structure, the complex is composed of 8 subunits; MtrA, MtrB, MtrC, MtrD, MtrE, MtrF, MtrG and MtrH.

It localises to the cell membrane. It catalyses the reaction 5-methyl-5,6,7,8-tetrahydromethanopterin + coenzyme M + 2 Na(+)(in) = 5,6,7,8-tetrahydromethanopterin + methyl-coenzyme M + 2 Na(+)(out). The protein operates within one-carbon metabolism; methanogenesis from CO(2); methyl-coenzyme M from 5,10-methylene-5,6,7,8-tetrahydromethanopterin: step 2/2. Part of a complex that catalyzes the formation of methyl-coenzyme M and tetrahydromethanopterin from coenzyme M and methyl-tetrahydromethanopterin. This is an energy-conserving, sodium-ion translocating step. This Methanococcus maripaludis (strain C5 / ATCC BAA-1333) protein is Tetrahydromethanopterin S-methyltransferase subunit B.